The chain runs to 334 residues: Holliday junction branch migration complex subunit RuvB (334 aa).

The segment at M1–Y181 is large ATPase domain (RuvB-L). ATP is bound by residues I20, R21, G62, K65, T66, T67, E128–Y130, R171, Y181, and R218. T66 provides a ligand contact to Mg(2+). The small ATPAse domain (RuvB-S) stretch occupies residues S182–N252. The tract at residues K255–N334 is head domain (RuvB-H). DNA-binding residues include R310 and R315.

Belongs to the RuvB family. In terms of assembly, homohexamer. Forms an RuvA(8)-RuvB(12)-Holliday junction (HJ) complex. HJ DNA is sandwiched between 2 RuvA tetramers; dsDNA enters through RuvA and exits via RuvB. An RuvB hexamer assembles on each DNA strand where it exits the tetramer. Each RuvB hexamer is contacted by two RuvA subunits (via domain III) on 2 adjacent RuvB subunits; this complex drives branch migration. In the full resolvosome a probable DNA-RuvA(4)-RuvB(12)-RuvC(2) complex forms which resolves the HJ.

The protein resides in the cytoplasm. The catalysed reaction is ATP + H2O = ADP + phosphate + H(+). Its function is as follows. The RuvA-RuvB-RuvC complex processes Holliday junction (HJ) DNA during genetic recombination and DNA repair, while the RuvA-RuvB complex plays an important role in the rescue of blocked DNA replication forks via replication fork reversal (RFR). RuvA specifically binds to HJ cruciform DNA, conferring on it an open structure. The RuvB hexamer acts as an ATP-dependent pump, pulling dsDNA into and through the RuvAB complex. RuvB forms 2 homohexamers on either side of HJ DNA bound by 1 or 2 RuvA tetramers; 4 subunits per hexamer contact DNA at a time. Coordinated motions by a converter formed by DNA-disengaged RuvB subunits stimulates ATP hydrolysis and nucleotide exchange. Immobilization of the converter enables RuvB to convert the ATP-contained energy into a lever motion, pulling 2 nucleotides of DNA out of the RuvA tetramer per ATP hydrolyzed, thus driving DNA branch migration. The RuvB motors rotate together with the DNA substrate, which together with the progressing nucleotide cycle form the mechanistic basis for DNA recombination by continuous HJ branch migration. Branch migration allows RuvC to scan DNA until it finds its consensus sequence, where it cleaves and resolves cruciform DNA. The chain is Holliday junction branch migration complex subunit RuvB from Acinetobacter baumannii (strain AB307-0294).